The chain runs to 126 residues: Holo-[acyl-carrier-protein] synthase (126 aa).

Mg(2+) is bound by residues D9 and E58.

The protein belongs to the P-Pant transferase superfamily. AcpS family. The cofactor is Mg(2+).

Its subcellular location is the cytoplasm. The catalysed reaction is apo-[ACP] + CoA = holo-[ACP] + adenosine 3',5'-bisphosphate + H(+). Its function is as follows. Transfers the 4'-phosphopantetheine moiety from coenzyme A to a Ser of acyl-carrier-protein. This is Holo-[acyl-carrier-protein] synthase from Erwinia tasmaniensis (strain DSM 17950 / CFBP 7177 / CIP 109463 / NCPPB 4357 / Et1/99).